The following is a 570-amino-acid chain: Double-stranded RNA-binding protein Staufen homolog 2 (570 aa).

The DRBM 1 domain maps to 8-75 (TPVCLVNELA…ANKALTESTL (68 aa)). 2 disordered regions span residues 71-94 (TESTLPKPVQKPPKSNVNNNPGSI) and 178-203 (ALQNEPIPEKSPQNGESGKEMDDDKD). The segment covering 83–94 (PKSNVNNNPGSI) has biased composition (polar residues). The DRBM 2 domain maps to 95-181 (TPTVELNGLA…AMKALQALQN (87 aa)). The residue at position 188 (Ser188) is a Phosphoserine. Basic and acidic residues predominate over residues 194–203 (SGKEMDDDKD). DRBM domains follow at residues 207 to 274 (SEIS…ELKK) and 307 to 375 (NPIS…QLGY). 2 consecutive short sequence motifs (nuclear localization signal) follow at residues 273–291 (KKLPPLPVVEKPKLFFKKR) and 373–412 (LGYKASTSLQDPLDKTGENKGWSGPKPGFPEPTNNTPKGI). The tract at residues 381-413 (LQDPLDKTGENKGWSGPKPGFPEPTNNTPKGIL) is disordered. Positions 381–570 (LQDPLDKTGE…QDCKKSKSAI (190 aa)) are required for dendritic transport. The residue at position 395 (Ser395) is a Phosphoserine. The residue at position 405 (Thr405) is a Phosphothreonine. Phosphoserine is present on residues Ser416, Ser426, Ser440, Ser455, and Ser492. The interval 545–570 (LREKADNNQAKPASISQDCKKSKSAI) is disordered. A compositionally biased stretch (polar residues) spans 551 to 561 (NNQAKPASISQ).

In terms of assembly, interacts with microtubules. Isoform 2 and isoform 3 may also interact with ribosomes, and this association is independent of translation. Identified in a mRNP complex, at least composed of DHX9, DDX3X, ELAVL1, HNRNPU, IGF2BP1, ILF3, PABPC1, PCBP2, PTBP2, STAU1, STAU2, SYNCRIP and YBX1. Interacts with the exportin XPO5. This requires RNA and RAN bound to GTP. Interacts with TRIM71 (via NHL repeats) in an RNA-dependent manner. In terms of tissue distribution, expressed in brain and neurons, where isoform 2 and isoform 3 appear to be the most abundant. Expressed at the neuromuscular junction of the extensor digitorum longus, tibialis anterior and soleus muscles. Expression at neuromuscular junctions is most pronounced in slow-twitch muscle. Also weakly expressed in heart, kidney, ovary and testis.

It localises to the cytoplasm. The protein resides in the nucleus. The protein localises to the nucleolus. It is found in the endoplasmic reticulum. Functionally, RNA-binding protein required for the microtubule-dependent transport of neuronal RNA from the cell body to the dendrite. As protein synthesis occurs within the dendrite, the localization of specific mRNAs to dendrites may be a prerequisite for neurite outgrowth and plasticity at sites distant from the cell body. The protein is Double-stranded RNA-binding protein Staufen homolog 2 (Stau2) of Mus musculus (Mouse).